The following is a 457-amino-acid chain: Siroheme synthase (457 aa).

A precorrin-2 dehydrogenase /sirohydrochlorin ferrochelatase region spans residues 1–204; sequence MDHLPIFCQL…ADEKAVNATT (204 aa). NAD(+)-binding positions include 22–23 and 43–44; these read DV and LT. Ser-128 is modified (phosphoserine). Residues 216 to 457 are uroporphyrinogen-III C-methyltransferase; it reads GEVVLVGAGP…RDKLNWFSNH (242 aa). Residue Pro-225 participates in S-adenosyl-L-methionine binding. Asp-248 (proton acceptor) is an active-site residue. The Proton donor role is filled by Lys-270. Residues 301–303, Ile-306, 331–332, Met-382, and Gly-411 contribute to the S-adenosyl-L-methionine site; these read GGD and TA.

In the N-terminal section; belongs to the precorrin-2 dehydrogenase / sirohydrochlorin ferrochelatase family. This sequence in the C-terminal section; belongs to the precorrin methyltransferase family.

It carries out the reaction uroporphyrinogen III + 2 S-adenosyl-L-methionine = precorrin-2 + 2 S-adenosyl-L-homocysteine + H(+). The enzyme catalyses precorrin-2 + NAD(+) = sirohydrochlorin + NADH + 2 H(+). It catalyses the reaction siroheme + 2 H(+) = sirohydrochlorin + Fe(2+). Its pathway is cofactor biosynthesis; adenosylcobalamin biosynthesis; precorrin-2 from uroporphyrinogen III: step 1/1. The protein operates within cofactor biosynthesis; adenosylcobalamin biosynthesis; sirohydrochlorin from precorrin-2: step 1/1. It participates in porphyrin-containing compound metabolism; siroheme biosynthesis; precorrin-2 from uroporphyrinogen III: step 1/1. It functions in the pathway porphyrin-containing compound metabolism; siroheme biosynthesis; siroheme from sirohydrochlorin: step 1/1. Its pathway is porphyrin-containing compound metabolism; siroheme biosynthesis; sirohydrochlorin from precorrin-2: step 1/1. Functionally, multifunctional enzyme that catalyzes the SAM-dependent methylations of uroporphyrinogen III at position C-2 and C-7 to form precorrin-2 via precorrin-1. Then it catalyzes the NAD-dependent ring dehydrogenation of precorrin-2 to yield sirohydrochlorin. Finally, it catalyzes the ferrochelation of sirohydrochlorin to yield siroheme. The sequence is that of Siroheme synthase from Salmonella typhi.